Reading from the N-terminus, the 218-residue chain is GTP cyclohydrolase 1 (218 aa).

Residues C109, H112, and C180 each contribute to the Zn(2+) site.

This sequence belongs to the GTP cyclohydrolase I family. As to quaternary structure, toroid-shaped homodecamer, composed of two pentamers of five dimers.

It catalyses the reaction GTP + H2O = 7,8-dihydroneopterin 3'-triphosphate + formate + H(+). It participates in cofactor biosynthesis; 7,8-dihydroneopterin triphosphate biosynthesis; 7,8-dihydroneopterin triphosphate from GTP: step 1/1. The chain is GTP cyclohydrolase 1 from Haemophilus influenzae (strain 86-028NP).